The primary structure comprises 531 residues: Histone-arginine methyltransferase CARMER (531 aa).

An SAM-dependent MTase PRMT-type domain is found at 141–450 (ASQYFQFYGY…QSYDVTIDLH (310 aa)). Positions 154, 163, 187, 209, 238, and 266 each coordinate S-adenosyl-L-methionine. Position 501 is an asymmetric dimethylarginine; by autocatalysis (R501).

It belongs to the class I-like SAM-binding methyltransferase superfamily. Protein arginine N-methyltransferase family. In terms of assembly, homodimer. The dimethylated protein is the major form.

Its subcellular location is the cytoplasm. It localises to the nucleus. The enzyme catalyses L-arginyl-[protein] + 2 S-adenosyl-L-methionine = N(omega),N(omega)-dimethyl-L-arginyl-[protein] + 2 S-adenosyl-L-homocysteine + 2 H(+). Methylates (mono- and asymmetric dimethylation) the guanidino nitrogens of arginyl residues in proteins. May methylate histone H3 at 'Arg-17' and activate transcription via chromatin remodeling. This is Histone-arginine methyltransferase CARMER (Art4) from Drosophila persimilis (Fruit fly).